The following is a 155-amino-acid chain: MRCPFCGNVDTQVKDSRPAEDHVAIRRRRFCPACGGRFTTYERVQLRDLVVIKSSGKREDFDRDKLERSIRIAMQKRPVEPDRLDQMISGIVRRLESMGETDIPSATIGEIVMEALARIDTVGYVRFASVYKNFQAADDFDKFVSELRPPTGKDS.

The segment at 3–34 (CPFCGNVDTQVKDSRPAEDHVAIRRRRFCPAC) is a zinc-finger region. Residues 49 to 139 (LVVIKSSGKR…VYKNFQAADD (91 aa)) enclose the ATP-cone domain.

This sequence belongs to the NrdR family. Requires Zn(2+) as cofactor.

Functionally, negatively regulates transcription of bacterial ribonucleotide reductase nrd genes and operons by binding to NrdR-boxes. The sequence is that of Transcriptional repressor NrdR from Dinoroseobacter shibae (strain DSM 16493 / NCIMB 14021 / DFL 12).